The following is a 988-amino-acid chain: Bifunctional glutamine synthetase adenylyltransferase/adenylyl-removing enzyme (988 aa).

Residues 1-474 are adenylyl removase; sequence MSSSAIDADI…HYSKLFEGDP (474 aa). The interval 480-988 is adenylyl transferase; sequence LPIDYAGGAE…FNRLIGGNGE (509 aa).

It belongs to the GlnE family. Requires Mg(2+) as cofactor.

It catalyses the reaction [glutamine synthetase]-O(4)-(5'-adenylyl)-L-tyrosine + phosphate = [glutamine synthetase]-L-tyrosine + ADP. The catalysed reaction is [glutamine synthetase]-L-tyrosine + ATP = [glutamine synthetase]-O(4)-(5'-adenylyl)-L-tyrosine + diphosphate. Functionally, involved in the regulation of glutamine synthetase GlnA, a key enzyme in the process to assimilate ammonia. When cellular nitrogen levels are high, the C-terminal adenylyl transferase (AT) inactivates GlnA by covalent transfer of an adenylyl group from ATP to specific tyrosine residue of GlnA, thus reducing its activity. Conversely, when nitrogen levels are low, the N-terminal adenylyl removase (AR) activates GlnA by removing the adenylyl group by phosphorolysis, increasing its activity. The regulatory region of GlnE binds the signal transduction protein PII (GlnB) which indicates the nitrogen status of the cell. The protein is Bifunctional glutamine synthetase adenylyltransferase/adenylyl-removing enzyme of Rhodopseudomonas palustris (strain HaA2).